The primary structure comprises 284 residues: Short-chain dehydrogenase RED1 (284 aa).

The NADP(+) site is built by isoleucine 11, threonine 37, aspartate 58, asparagine 86, tyrosine 151, lysine 155, valine 184, and threonine 186. The active-site Proton acceptor is the tyrosine 151. Residue lysine 155 is the Lowers pKa of active site Tyr of the active site.

It belongs to the short-chain dehydrogenases/reductases (SDR) family.

The protein operates within polyketide biosynthesis. Its function is as follows. Short-chain dehydrogenase; part of the gene cluster that mediates the biosynthesis of pyriculol and pyriculariol, two heptaketides that induce lesion formation upon application on rice leaves but are dispensable for pathogenicity. The highly reducing polyketide synthase synthesizes the heptaketide backbone of pyriculol and pyriculariol. Pyriculol and pyriculariol contain several hydroxyl moieties and double bonds, so it can be assumed that several reduction steps occur during biosynthesis. These reactions could be executed by PKS19 itself or partly by the tailoring enzymes OXR1, OXR2, RED1, RED2 or RED3, identified within the cluster. The FAD-linked oxidoreductase OXR1 is the only tailoring enzyme for which the function has been determined yet, and is involved in the oxidation of dihydropyriculol and dihydropyriculariol into pyriculol and pyriculariol, respectively. This chain is Short-chain dehydrogenase RED1, found in Pyricularia oryzae (strain 70-15 / ATCC MYA-4617 / FGSC 8958) (Rice blast fungus).